Reading from the N-terminus, the 198-residue chain is Na(+)-translocating NADH-quinone reductase subunit E (198 aa).

6 helical membrane passes run 11–31 (SVFI…FLAV), 35–55 (VSTA…SVPV), 77–97 (FLNF…LEMI), 110–130 (GIFL…SFMV), 140–160 (VVYG…LAGI), and 176–196 (LGIT…FSGV).

It belongs to the NqrDE/RnfAE family. As to quaternary structure, composed of six subunits; NqrA, NqrB, NqrC, NqrD, NqrE and NqrF.

It localises to the cell inner membrane. The catalysed reaction is a ubiquinone + n Na(+)(in) + NADH + H(+) = a ubiquinol + n Na(+)(out) + NAD(+). Functionally, NQR complex catalyzes the reduction of ubiquinone-1 to ubiquinol by two successive reactions, coupled with the transport of Na(+) ions from the cytoplasm to the periplasm. NqrA to NqrE are probably involved in the second step, the conversion of ubisemiquinone to ubiquinol. In Histophilus somni (strain 129Pt) (Haemophilus somnus), this protein is Na(+)-translocating NADH-quinone reductase subunit E.